The chain runs to 104 residues: Secretoglobin family 3A member 1 (104 aa).

An N-terminal signal peptide occupies residues 1-20 (MKLAALLGLCVALSCSSAAA).

It belongs to the secretoglobin family. UGRP subfamily. Homodimer; disulfide-linked. Highly expressed in lung and prostate. Also found in mammary gland, spleen, pancreas, testis and liver. Detected throughout the airway epithelium in lung, with highest expression in large airways. Found in lung submucosal glands where it localizes to acinar and ductile cells. Not detected in respiratory bronchioles, alveolar ducts or alveolar epithelium. In mammary gland, specifically localizes to luminal epithelial cells.

Its subcellular location is the secreted. Secreted cytokine-like protein. Inhibits cell growth in vitro. The protein is Secretoglobin family 3A member 1 (SCGB3A1) of Homo sapiens (Human).